A 138-amino-acid chain; its full sequence is Small ribosomal subunit protein uS8c (138 aa).

This sequence belongs to the universal ribosomal protein uS8 family. Part of the 30S ribosomal subunit.

It localises to the plastid. Its subcellular location is the chloroplast. In terms of biological role, one of the primary rRNA binding proteins, it binds directly to 16S rRNA central domain where it helps coordinate assembly of the platform of the 30S subunit. In Oenothera elata subsp. hookeri (Hooker's evening primrose), this protein is Small ribosomal subunit protein uS8c (rps8).